The following is a 297-amino-acid chain: Probable transcription factor vicR (297 aa).

2 disordered regions span residues 45-80 and 100-134; these read LPGLDSQASPQSGQKEEMRRKNAEAQMQNDSNHSET and TNQAYQNHPSRSREDITNSRAERHSQTSTQPKNVH. The segment covering 58–67 has biased composition (basic and acidic residues); sequence QKEEMRRKNA. The span at 69-80 shows a compositional bias: polar residues; it reads AQMQNDSNHSET. Residues 110–124 are compositionally biased toward basic and acidic residues; that stretch reads RSREDITNSRAERHS.

It localises to the nucleus. Its function is as follows. Probable transcription factor; part of the gene cluster that mediates the biosynthesis of the secondary metabolite victorin, the molecular basis for Victoria blight of oats. May play a role in the regulation of the production of victorin. The sequence is that of Probable transcription factor vicR from Bipolaris victoriae (strain FI3) (Victoria blight of oats agent).